Consider the following 323-residue polypeptide: Beta-ketoacyl-[acyl-carrier-protein] synthase III (323 aa).

Active-site residues include cysteine 113 and histidine 250. An ACP-binding region spans residues 251–255 (QANRR). Asparagine 280 is an active-site residue.

Belongs to the thiolase-like superfamily. FabH family. As to quaternary structure, homodimer.

The protein resides in the cytoplasm. It carries out the reaction malonyl-[ACP] + acetyl-CoA + H(+) = 3-oxobutanoyl-[ACP] + CO2 + CoA. It functions in the pathway lipid metabolism; fatty acid biosynthesis. In terms of biological role, catalyzes the condensation reaction of fatty acid synthesis by the addition to an acyl acceptor of two carbons from malonyl-ACP. Catalyzes the first condensation reaction which initiates fatty acid synthesis and may therefore play a role in governing the total rate of fatty acid production. Possesses both acetoacetyl-ACP synthase and acetyl transacylase activities. Its substrate specificity determines the biosynthesis of branched-chain and/or straight-chain of fatty acids. This is Beta-ketoacyl-[acyl-carrier-protein] synthase III from Sinorhizobium medicae (strain WSM419) (Ensifer medicae).